The following is a 258-amino-acid chain: MLNGKTALVTGSTSGIGLGIAKALAAQGANIIVNGFGDADAAKAEIAQAGQGIRVGYHGADMSKAAEIEDMMRYAQSDFGGADILVNNAGIQHVAAIEDFPPERWDAIIAINLTSAFHTTRLALPGMKQKDWGRIINVASTHGLVASAQKSAYVAAKHGIVGFTKVTALETAQTGVTANAICPGWVLTPLVQKQVEARAQKEGIPVEQAKRELVLEKQPSGQFVTPDELGALAVFLSSEAARQVRGAIWNMDGGWVAQ.

Position 8-32 (8-32 (LVTGSTSGIGLGIAKALAAQGANII)) interacts with NAD(+). Ser-140 contributes to the substrate binding site. The Proton acceptor role is filled by Tyr-153.

It belongs to the short-chain dehydrogenases/reductases (SDR) family.

It catalyses the reaction (R)-3-hydroxybutanoate + NAD(+) = acetoacetate + NADH + H(+). This chain is D-beta-hydroxybutyrate dehydrogenase (hbdH1), found in Cupriavidus necator (strain ATCC 17699 / DSM 428 / KCTC 22496 / NCIMB 10442 / H16 / Stanier 337) (Ralstonia eutropha).